Reading from the N-terminus, the 626-residue chain is MGRTQPSYTMAVNRELEKLERIIERLHSPILSLLLERVKEKVRYTQSASYDELVDPYNLVYFALIWALAEECEKMEEYVLDAYPIKGGVKLFLSNFKEKTIRTTFPVYTITDNPDIVLQHPEVRYYEKEKWKTLDGKEVKVYRFEVESLDAYYYMRKRLNVVNETPTVLSQTLYRLGIKPFRRFRSSDDEFPKVTIARVVPLDWYGESLKGKVFEVKINNEVRRFYEKPEVEVDIAECLGEACNYVKSNVKIRIEKKRSPVSAKGLIEWSFISLTPIHEIAYATIGKVLTINEAWVAFKRRIIIPKVVPRVEKLRRLEDIMMVDKGGLILFPQPGCYDNVYQVDFSSMYPSLIVKHNISAETVEACDDIKTELHSICLKEKGIIPEALQWLIERKSELKKIDEERAEAIKWILVASFGYLGYRNSLFGKIEAYEMVTYLARKTLRRTMEIAEEMGLRVLHGIIDSLVVKGDNVDKFIEKVEKETGLRLDYKRYNWIIFTITRNNTPYPTRYIANMNGEMIAKGLIRENMPNIVKSFLEDVLREFSSAKTCSDVKKLRIRDLFEHYRKRAINGEPIDYVIWIKDVPYVRGIKGFYEARLGYMGRDVNYYINYLKRVYEDVEEVMSRC.

This sequence belongs to the DNA polymerase type-B family.

It carries out the reaction DNA(n) + a 2'-deoxyribonucleoside 5'-triphosphate = DNA(n+1) + diphosphate. Its function is as follows. This polymerase is devoid of exonuclease activity. In Saccharolobus solfataricus (strain ATCC 35092 / DSM 1617 / JCM 11322 / P2) (Sulfolobus solfataricus), this protein is DNA polymerase 2 (dpo2).